The following is a 665-amino-acid chain: Prelamin-A/C (665 aa).

Met1 is modified (N-acetylmethionine). The segment at 1 to 27 (METPSQRRPTRSGAQASSTPLSPTRIT) is disordered. The segment at 1–33 (METPSQRRPTRSGAQASSTPLSPTRITRLQEKE) is head. The interaction with MLIP stretch occupies residues 1–130 (METPSQRRPT…TKKEGDLLAA (130 aa)). A Phosphothreonine modification is found at Thr3. Ser5 is modified (phosphoserine). Thr10 carries the post-translational modification Phosphothreonine. Phosphoserine is present on residues Ser12 and Ser18. At Thr19 the chain carries Phosphothreonine. Ser22 carries the phosphoserine modification. The region spanning 31 to 387 (EKEDLQELND…KLLEGEEERL (357 aa)) is the IF rod domain. Lys32 carries the post-translational modification N6-acetyllysine; alternate. Residue Lys32 is modified to N6-succinyllysine; alternate. Residue Lys32 forms a Glycyl lysine isopeptide (Lys-Gly) (interchain with G-Cter in SUMO2); alternate linkage. The interval 34–70 (DLQELNDRLAVYIDRVRSLETENAGLRLRITESEEVV) is coil 1A. Ser51, Ser66, and Ser71 each carry phosphoserine. Residues 71–80 (SREVSGIKAA) are linker 1. Lys78 and Lys97 each carry N6-acetyllysine. The segment at 81–218 (YEAELGDARK…NIYSEELRET (138 aa)) is coil 1B. Residue Lys97 forms a Glycyl lysine isopeptide (Lys-Gly) (interchain with G-Cter in SUMO2) linkage. Ser107 is modified (phosphoserine). An N6-acetyllysine mark is found at Lys108, Lys114, Lys123, Lys135, Lys144, and Lys155. Lys171 bears the N6-acetyllysine; alternate mark. Residue Lys171 is modified to N6-succinyllysine; alternate. Lys171 participates in a covalent cross-link: Glycyl lysine isopeptide (Lys-Gly) (interchain with G-Cter in SUMO2); alternate. Lys180, Lys201, and Lys208 each carry N6-acetyllysine. Lys201 is covalently cross-linked (Glycyl lysine isopeptide (Lys-Gly) (interchain with G-Cter in SUMO2); alternate). Lys201 is covalently cross-linked (Glycyl lysine isopeptide (Lys-Gly) (interchain with G-Cter in SUMO); alternate). A Glycyl lysine isopeptide (Lys-Gly) (interchain with G-Cter in SUMO2) cross-link involves residue Lys208. Ser212 bears the Phosphoserine mark. Residues Lys219 and Lys233 each participate in a glycyl lysine isopeptide (Lys-Gly) (interchain with G-Cter in SUMO2) cross-link. Residues 219-242 (KRRHETRLVEIDNGKQREFESRLA) form a linker 2 region. Residues Lys233, Lys260, Lys265, and Lys270 each carry the N6-acetyllysine modification. The segment at 243 to 383 (DALQELRAQH…HAYRKLLEGE (141 aa)) is coil 2. Residue Lys260 forms a Glycyl lysine isopeptide (Lys-Gly) (interchain with G-Cter in SUMO2); alternate linkage. A Glycyl lysine isopeptide (Lys-Gly) (interchain with G-Cter in SUMO2); alternate cross-link involves residue Lys270. A phosphoserine mark is found at Ser277, Ser282, Ser301, and Ser307. Lys311 is covalently cross-linked (Glycyl lysine isopeptide (Lys-Gly) (interchain with G-Cter in SUMO2); alternate). An N6-acetyllysine mark is found at Lys311, Lys316, and Lys341. Glycyl lysine isopeptide (Lys-Gly) (interchain with G-Cter in SUMO2) cross-links involve residues Lys366 and Lys378. The interval 384-442 (EERLRLSPSPTSQRSRGRASSHSSQSQGGGSVTKKRKLESSESRSSFSQHARTSGRVAV) is disordered. The tract at residues 384-665 (EERLRLSPSP…TQSSQNCSIM (282 aa)) is tail. Ser390, Ser392, Ser395, Ser398, Ser403, Ser404, Ser406, Ser407, Ser409, and Ser414 each carry phosphoserine. Positions 395–409 (SQRSRGRASSHSSQS) are enriched in low complexity. Thr416 is subject to Phosphothreonine. The residue at position 417 (Lys417) is an N6-acetyllysine. Glycyl lysine isopeptide (Lys-Gly) (interchain with G-Cter in SUMO2) cross-links involve residues Lys417 and Lys420. The Nuclear localization signal signature appears at 417 to 422 (KKRKLE). Residues Ser423, Ser426, Ser429, and Ser431 each carry the phosphoserine modification. An LTD domain is found at 428 to 545 (SSFSQHARTS…EEVAMRKLVR (118 aa)). Lys450 is covalently cross-linked (Glycyl lysine isopeptide (Lys-Gly) (interchain with G-Cter in SUMO2); alternate). N6-acetyllysine occurs at positions 450 and 457. 2 positions are modified to phosphoserine: Ser458 and Ser463. Glycyl lysine isopeptide (Lys-Gly) (interchain with G-Cter in SUMO2) cross-links involve residues Lys470 and Lys486. Position 486 is an N6-acetyllysine (Lys486). Thr496 is modified (phosphothreonine). Ser500 is modified (phosphoserine). 2 positions are modified to phosphothreonine: Thr505 and Thr510. A Phosphoserine modification is found at Ser546. Thr548 bears the Phosphothreonine mark. Residues 552–561 (DNDDEEEDGD) are compositionally biased toward acidic residues. The interval 552–577 (DNDDEEEDGDELLHHHRGSHCSSSGD) is disordered. Phosphoserine occurs at positions 570 and 573. Lys599 is covalently cross-linked (Glycyl lysine isopeptide (Lys-Gly) (interchain with G-Cter in SUMO2); alternate). A Glycyl lysine isopeptide (Lys-Gly) (interchain with G-Cter in SUMO1); alternate cross-link involves residue Lys599. 4 positions are modified to phosphoserine: Ser613, Ser614, Ser617, and Ser620. O-linked (GlcNAc) serine glycosylation is found at Ser626 and Ser629. Phosphoserine occurs at positions 629, 633, 637, and 653. Residues 648–662 (LLGNSSPRTQSSQNC) constitute a propeptide, removed in Lamin-A/C form. The residue at position 662 (Cys662) is a Cysteine methyl ester. Cys662 carries S-farnesyl cysteine lipidation. Residues 663 to 665 (SIM) constitute a propeptide, removed in Prelamin-A/C form and in Lamin-A/C form.

This sequence belongs to the intermediate filament family. In terms of assembly, homodimer of lamin A and lamin C. Lamin dimers then assemble into dimeric head-to-tail polymers. Ultimately, two head-to-tail polymers assemble laterally into a protofilament with a uniformly shaped rod of 3.5 nm in diameter. Interacts with lamin-associated polypeptides IA, IB and TMPO-alpha, RB1 and with emerin. Interacts with SREBF1, SREBF2, SUN2 and TMEM43. Interacts with TMEM201. Proteolytically processed isoform A interacts with NARF. Interacts with SUN1. Interacts with MLIP. Interacts with DMPK; may regulate nuclear envelope stability. Interacts with SUV39H1; the interaction increases stability of SUV39H1. Interacts with SYNE2. Interacts with ITSN1 isoform 2. Interacts with IFFO1; enables the formation of an interior nucleoskeleton that is recruited to DNA double-strand breaks. As to quaternary structure, interacts with EMD. Interacts (via C-terminus) with LEMD2 (via N-terminus) (in vitro). Proteolytic cleavage of the C-terminal of 18 residues of prelamin-A/C results in the production of lamin-A/C. The prelamin-A/C maturation pathway includes farnesylation of CAAX motif by protein farnesyltransferase (FNTA and FNTB), removal of the last three amino acids (-AAX) by RCE1/FACE2 and/or ZMPSTE24, methylation of the C-terminal cysteine by ICMT and endoproteolytic removal of the last 15 C-terminal amino acids by ZMPSTE24. Proteolytic cleavage requires prior farnesylation and methylation, and absence of these blocks cleavage. Post-translationally, farnesylation of prelamin-A/C facilitates nuclear envelope targeting. In terms of processing, phosphorylation plays a key role in lamin organization, subcellular localization and nuclear envelope disintegration. Phosphorylation by CDK1 at Ser-22 and Ser-392 at the onset of mitosis drives lamin disassembly and nuclear envelope breakdown. Phosphorylation at Ser-22 and Ser-392 during interphase promotes localization to the nucleoplasm and regulates lamina assembly. Phosphorylation at Ser-22, Ser-392 and Ser-629 during interphase causes redistribution between the nucleus and the cytoplasm. Phosphorylation at Ser-22 by CDK1 regulates matrix stiffness. Phosphorylation status of Ser-22 determines its localization between double-strand break (DSB) sites and the nuclear matrix. Phosphorylated by ATR at Ser-282 in response to DNA damage, leading to lamin disassembly and nuclear envelope rupture. Phosphorylation also regulates stability in micronuclei arising from genome instability: phosphorylation at Ser-395 by ATR in response to genome instability and double-stranded DNA breaks primes LMNA for subsequent phosphorylation at Ser-392 by CDK1 and micronuclei envelope rupture. The rupture of micronuclear envelope triggers the cGAS-STING pathway thereby activating the type I interferon response and innate immunity. Acetylation by KAT8 is required for nuclear architecture. Post-translationally, sumoylation is necessary for the localization to the nuclear envelope.

It localises to the nucleus lamina. The protein resides in the nucleus envelope. Its subcellular location is the nucleus. It is found in the nucleoplasm. The protein localises to the nucleus matrix. Its function is as follows. Lamins are intermediate filament proteins that assemble into a filamentous meshwork, and which constitute the major components of the nuclear lamina, a fibrous layer on the nucleoplasmic side of the inner nuclear membrane. Lamins provide a framework for the nuclear envelope, bridging the nuclear envelope and chromatin, thereby playing an important role in nuclear assembly, chromatin organization, nuclear membrane and telomere dynamics. Lamin A and C also regulate matrix stiffness by conferring nuclear mechanical properties. The structural integrity of the lamina is strictly controlled by the cell cycle, as seen by the disintegration and formation of the nuclear envelope in prophase and telophase, respectively. Lamin A and C are present in equal amounts in the lamina of mammals. Also invoved in DNA repair: recruited by DNA repair proteins XRCC4 and IFFO1 to the DNA double-strand breaks (DSBs) to prevent chromosome translocation by immobilizing broken DNA ends. Required for normal development of peripheral nervous system and skeletal muscle and for muscle satellite cell proliferation. Required for osteoblastogenesis and bone formation. Also prevents fat infiltration of muscle and bone marrow, helping to maintain the volume and strength of skeletal muscle and bone. Required for cardiac homeostasis. Functionally, prelamin-A/C can accelerate smooth muscle cell senescence. It acts to disrupt mitosis and induce DNA damage in vascular smooth muscle cells (VSMCs), leading to mitotic failure, genomic instability, and premature senescence. This chain is Prelamin-A/C (Lmna), found in Rattus norvegicus (Rat).